The following is a 255-amino-acid chain: Imidazole glycerol phosphate synthase subunit HisF (255 aa).

Active-site residues include Asp-12 and Asp-131.

This sequence belongs to the HisA/HisF family. Heterodimer of HisH and HisF.

The protein resides in the cytoplasm. The enzyme catalyses 5-[(5-phospho-1-deoxy-D-ribulos-1-ylimino)methylamino]-1-(5-phospho-beta-D-ribosyl)imidazole-4-carboxamide + L-glutamine = D-erythro-1-(imidazol-4-yl)glycerol 3-phosphate + 5-amino-1-(5-phospho-beta-D-ribosyl)imidazole-4-carboxamide + L-glutamate + H(+). Its pathway is amino-acid biosynthesis; L-histidine biosynthesis; L-histidine from 5-phospho-alpha-D-ribose 1-diphosphate: step 5/9. Functionally, IGPS catalyzes the conversion of PRFAR and glutamine to IGP, AICAR and glutamate. The HisF subunit catalyzes the cyclization activity that produces IGP and AICAR from PRFAR using the ammonia provided by the HisH subunit. In Neisseria meningitidis serogroup C (strain 053442), this protein is Imidazole glycerol phosphate synthase subunit HisF.